A 172-amino-acid chain; its full sequence is NADH-quinone oxidoreductase subunit B (172 aa).

The [4Fe-4S] cluster site is built by Cys52, Cys53, Cys117, and Cys147.

Belongs to the complex I 20 kDa subunit family. As to quaternary structure, NDH-1 is composed of 14 different subunits. Subunits NuoB, C, D, E, F, and G constitute the peripheral sector of the complex. It depends on [4Fe-4S] cluster as a cofactor.

It is found in the cell inner membrane. The catalysed reaction is a quinone + NADH + 5 H(+)(in) = a quinol + NAD(+) + 4 H(+)(out). In terms of biological role, NDH-1 shuttles electrons from NADH, via FMN and iron-sulfur (Fe-S) centers, to quinones in the respiratory chain. Couples the redox reaction to proton translocation (for every two electrons transferred, four hydrogen ions are translocated across the cytoplasmic membrane), and thus conserves the redox energy in a proton gradient. This Ehrlichia ruminantium (strain Gardel) protein is NADH-quinone oxidoreductase subunit B.